The primary structure comprises 805 residues: Angiotensin-converting enzyme 2 (805 aa).

Residues Met1–Ala17 form the signal peptide. Over Gln18–Ser740 the chain is Extracellular. The Peptidase M2 domain maps to Ser19–Ser607. Residues Asp30–Tyr41 are interaction with SARS-CoV spike glycoprotein. Asn53 is a glycosylation site (N-linked (GlcNAc...) asparagine). The tract at residues Met82–Pro84 is interaction with SARS-CoV spike glycoprotein. Asn90 and Asn103 each carry an N-linked (GlcNAc...) asparagine glycan. A disulfide bridge connects residues Cys133 and Cys141. Residue Arg169 participates in chloride binding. Residue Arg273 coordinates substrate. The N-linked (GlcNAc...) asparagine glycan is linked to Asn322. An intrachain disulfide couples Cys344 to Cys361. His345–Pro346 lines the substrate pocket. The interval Lys353–Arg357 is interaction with SARS-CoV spike glycoprotein. Zn(2+) is bound at residue His374. Glu375 (proton acceptor) is an active-site residue. Zn(2+) is bound by residues His378 and Glu402. Asn432 carries N-linked (GlcNAc...) asparagine glycosylation. 2 residues coordinate chloride: Trp477 and Lys481. His505 serves as the catalytic Proton donor. Tyr515 lines the substrate pocket. Cys530 and Cys542 are disulfide-bonded. Residue Asn546 is glycosylated (N-linked (GlcNAc...) asparagine). Positions Ala614–Phe805 constitute a Collectrin-like domain. Residues Arg652–Lys659 form an essential for cleavage by ADAM17 region. Asn690 carries N-linked (GlcNAc...) asparagine glycosylation. Residues Arg697–Arg716 form an essential for cleavage by TMPRSS11D and TMPRSS2 region. The helical transmembrane segment at Ile741–Ile761 threads the bilayer. At Phe762 to Phe805 the chain is on the cytoplasmic side. The interval Asn772–Phe805 is disordered. The LIR motif lies at Glu778–Ile786. Position 781 is a phosphotyrosine (Tyr781). The Endocytic sorting signal signature appears at Tyr781–Ile784. The SH2-binding motif lies at Tyr781–Asp785. Ser783 is subject to Phosphoserine. Lys788 participates in a covalent cross-link: Glycyl lysine isopeptide (Lys-Gly) (interchain with G-Cter in ubiquitin). The span at Gly789–Phe805 shows a compositional bias: polar residues. The PTB motif lies at Asn792 to Phe795. The PDZ-binding motif lies at Thr803–Phe805.

Belongs to the peptidase M2 family. Homodimer. Interacts with the catalytically active form of TMPRSS2. Interacts with SLC6A19; this interaction is essential for expression and function of SLC6A19 in intestine. Interacts with ITGA5:ITGB1. Probably interacts (via endocytic sorting signal motif) with AP2M1; the interaction is inhibited by phosphorylation of Tyr-781. Interacts (via PDZ-binding motif) with NHERF1 (via PDZ domains); the interaction may enhance ACE2 membrane residence. As to quaternary structure, (Microbial infection) Interacts with SARS coronavirus/SARS-CoV spike protein. In terms of assembly, (Microbial infection) Interacts with SARS coronavirus-2/SARS-CoV-2 spike protein (via RBD domain). (Microbial infection) Interacts with human coronavirus NL63 spike protein. As to quaternary structure, (Microbial infection) Interacts with human coronavirus NL63/HCoV-NL63 spike glycoprotein. In terms of assembly, (Microbial infection) Interacts with SARS coronavirus-2/SARS-CoV-2 spike protein; the interaction is increased by AVP/Arg-vasopressin with which they may form a complex. It depends on Zn(2+) as a cofactor. Chloride is required as a cofactor. N-glycosylation on Asn-90 may limit SARS infectivity. Post-translationally, proteolytic cleavage by ADAM17 generates a secreted form. Also cleaved by serine proteases: TMPRSS2, TMPRSS11D and HPN/TMPRSS1. In terms of processing, phosphorylated. Phosphorylation at Tyr-781 probably inhibits interaction with AP2M1 and enables interactions with proteins containing SH2 domains. Ubiquitinated. Ubiquitinated on Lys-788 via 'Lys-48'-linked ubiquitin. 'Lys-48'-linked deubiquitinated by USP50 on the Lys-788; leading to its stabilization. Expressed in endothelial cells from small and large arteries, and in arterial smooth muscle cells (at protein level). Expressed in enterocytes of the small intestine, Leydig cells and Sertoli cells (at protein level). Expressed in the renal proximal tubule and the small intestine (at protein level). Expressed in heart, kidney, testis, and gastrointestinal system (at protein level). In lung, expressed at low levels in some alveolar type 2 cells, the expression seems to be individual-specific (at protein level). Expressed in nasal epithelial cells (at protein level). Coexpressed with TMPRSS2 within some lung alveolar type 2 cells, ileal absorptive enterocytes, intestinal epithelial cells, cornea, gallbladder and nasal goblet secretory cells. Coexpressed with TMPRSS4 within mature enterocytes. As to expression, expressed in nasal and bronchial epithelial cells (at protein level).

It is found in the secreted. The protein resides in the cell membrane. Its subcellular location is the cytoplasm. It localises to the cell projection. The protein localises to the cilium. It is found in the apical cell membrane. The enzyme catalyses angiotensin II + H2O = angiotensin-(1-7) + L-phenylalanine. It catalyses the reaction angiotensin I + H2O = angiotensin-(1-9) + L-leucine. It carries out the reaction bradykinin(1-8) + H2O = bradykinin(1-7) + L-phenylalanine. The catalysed reaction is neurotensin + H2O = neurotensin-(1-12) + L-leucine. The enzyme catalyses neurotensin-(1-8) + H2O = neurotensin-(1-7) + L-arginine. It catalyses the reaction kinetensin + H2O = kinetensin-(1-8) + L-leucine. It carries out the reaction dynorphin A-(1-13) + H2O = dynorphin A-(1-12) + L-lysine. The catalysed reaction is apelin-13 + H2O = apelin-12 + L-phenylalanine. The enzyme catalyses [Pyr1]apelin-13 + H2O = [Pyr1]apelin-12 + L-phenylalanine. It catalyses the reaction apelin-17 + H2O = apelin-16 + L-phenylalanine. It carries out the reaction beta-casomorphin-7 + H2O = beta-casomorphin-6 + L-isoleucine. The catalysed reaction is neocasomorphin + H2O = neocasomorphin-(1-5) + L-isoleucine. With respect to regulation, regulated by chloride and fluoride, but not bromide. Chloride increases angiotensin I and decreases angiotensin II cleavage. Inhibited by MLN-4760, cFP_Leu, and EDTA, but not by the ACE inhibitors lisinopril, captopril and enalaprilat. Highly potent and selective in vitro ACE2 inhibitors were identified. In terms of biological role, essential counter-regulatory carboxypeptidase of the renin-angiotensin hormone system that is a critical regulator of blood volume, systemic vascular resistance, and thus cardiovascular homeostasis. Converts angiotensin I to angiotensin 1-9, a nine-amino acid peptide with anti-hypertrophic effects in cardiomyocytes, and angiotensin II to angiotensin 1-7, which then acts as a beneficial vasodilator and anti-proliferation agent, counterbalancing the actions of the vasoconstrictor angiotensin II. Also removes the C-terminal residue from three other vasoactive peptides, neurotensin, kinetensin, and des-Arg bradykinin, but is not active on bradykinin. Also cleaves other biological peptides, such as apelins (apelin-13, [Pyr1]apelin-13, apelin-17, apelin-36), casomorphins (beta-casomorphin-7, neocasomorphin) and dynorphin A with high efficiency. In addition, ACE2 C-terminus is homologous to collectrin and is responsible for the trafficking of the neutral amino acid transporter SL6A19 to the plasma membrane of gut epithelial cells via direct interaction, regulating its expression on the cell surface and its catalytic activity. Functionally, (Microbial infection) Acts as a receptor for human coronaviruses SARS-CoV and SARS-CoV-2, as well as human coronavirus NL63/HCoV-NL63. Non-functional as a carboxypeptidase. Its function is as follows. (Microbial infection) Non-functional as a receptor for human coronavirus SARS-CoV-2. This is Angiotensin-converting enzyme 2 from Homo sapiens (Human).